A 430-amino-acid polypeptide reads, in one-letter code: Nucleoporin NUP42 (430 aa).

Positions 1–68 (MSAFGNPFTS…AFGMPQFGTN (68 aa)) are disordered. The stretch at 2–5 (SAFG) is one SXFG 1 repeat. Residues 15–36 (NLSNTSGINPFTNNAASTNNMG) show a composition bias toward polar residues. 2 SAFGXPXFG repeats span residues 38–46 (SAFGRPSFG) and 58–66 (SAFGMPQFG). The segment covering 45–68 (FGTANTMTGGTTTSAFGMPQFGTN) has biased composition (low complexity). An SXFG 2 repeat occupies 78–81 (SAFG). 2 SAFGXPXFG repeats span residues 90 to 98 (SAFGAPAFG) and 112 to 120 (SAFGAPSFG). The tract at residues 121–230 (STGFGAMAAT…QNTSTSSGTG (110 aa)) is interactions with CRM1 and GFD1. FG repeat units follow at residues 124-125 (FG) and 134-135 (FG). A Phosphoserine modification is found at Ser-137. Residues 143–151 (SAFGQPAFG) form an SAFGXPXFG 5 repeat. 2 SXFG repeats span residues 168-171 (SAFG) and 182-185 (SPFG). Residues 180–294 (TTSPFGSLQQ…QSPFSGGSGG (115 aa)) are disordered. Low complexity predominate over residues 186 to 201 (SLQQNASQNASSTSSA). The stretch at 200 to 208 (SAFGKPTFG) is one SAFGXPXFG 6 repeat. The span at 209–230 (AATNTQSPFGTIQNTSTSSGTG) shows a compositional bias: polar residues. 2 SXFG repeats span residues 215–218 (SPFG) and 232–235 (SPFG). Composition is skewed to polar residues over residues 237–252 (FGTN…NLQS) and 260–285 (PFGT…TNNQ). 2 SXFG repeats span residues 259-262 (SPFG) and 277-280 (SAFG). Residues 296–297 (FG) form an FG 3 repeat. At Ser-298 the chain carries Phosphoserine. An SXFG 9 repeat occupies 312–315 (SSFG). 3 FG repeats span residues 319-322 (FSFG), 339-340 (FG), and 361-364 (FGFG). A disordered region spans residues 319–346 (FSFGITPQNDANKVSQSNPSFGQTMPNT). Positions 323–346 (ITPQNDANKVSQSNPSFGQTMPNT) are enriched in polar residues. The tract at residues 365-430 (QQQMNATNVN…DIPPPPALVA (66 aa)) is interaction with GLE1.

As to quaternary structure, component of the nuclear pore complex (NPC). NPC constitutes the exclusive means of nucleocytoplasmic transport. NPCs allow the passive diffusion of ions and small molecules and the active, nuclear transport receptor-mediated bidirectional transport of macromolecules such as proteins, RNAs, ribonucleoparticles (RNPs), and ribosomal subunits across the nuclear envelope. Due to its 8-fold rotational symmetry, all subunits are present with 8 copies or multiples thereof. NUP42 interacts with the NUP82 subcomplex. It interacts directly with GLE1, and through its FG repeats with GFD1, the heterodimeric mRNA transport factor MEX67/MTR2, and the karyopherin CRM1.

The protein localises to the nucleus. The protein resides in the nuclear pore complex. It localises to the nucleus membrane. In terms of biological role, functions as a component of the nuclear pore complex (NPC). NPC components, collectively referred to as nucleoporins (NUPs), can play the role of both NPC structural components and of docking or interaction partners for transiently associated nuclear transport factors. Active directional transport is assured by both, a Phe-Gly (FG) repeat affinity gradient for these transport factors across the NPC and a transport cofactor concentration gradient across the nuclear envelope (GSP1 and GSP2 GTPases associated predominantly with GTP in the nucleus, with GDP in the cytoplasm). NUP42 is specifically important for nuclear protein and mRNA export. The polypeptide is Nucleoporin NUP42 (NUP42) (Saccharomyces cerevisiae (strain ATCC 204508 / S288c) (Baker's yeast)).